The following is a 502-amino-acid chain: Probable glycine dehydrogenase (decarboxylating) subunit 2 (502 aa).

Lysine 273 is subject to N6-(pyridoxal phosphate)lysine.

The protein belongs to the GcvP family. C-terminal subunit subfamily. As to quaternary structure, the glycine cleavage system is composed of four proteins: P, T, L and H. In this organism, the P 'protein' is a heterodimer of two subunits. It depends on pyridoxal 5'-phosphate as a cofactor.

It catalyses the reaction N(6)-[(R)-lipoyl]-L-lysyl-[glycine-cleavage complex H protein] + glycine + H(+) = N(6)-[(R)-S(8)-aminomethyldihydrolipoyl]-L-lysyl-[glycine-cleavage complex H protein] + CO2. The glycine cleavage system catalyzes the degradation of glycine. The P protein binds the alpha-amino group of glycine through its pyridoxal phosphate cofactor; CO(2) is released and the remaining methylamine moiety is then transferred to the lipoamide cofactor of the H protein. The protein is Probable glycine dehydrogenase (decarboxylating) subunit 2 of Pyrococcus abyssi (strain GE5 / Orsay).